Consider the following 405-residue polypeptide: Serine/threonine-protein kinase 2 (405 aa).

The 352-residue stretch at 54 to 405 (NDDFYHISTG…IFSDWINGGN (352 aa)) folds into the Protein kinase domain. ATP contacts are provided by residues 60 to 68 (ISTGGYGIV) and lysine 84. Aspartate 274 serves as the catalytic Proton acceptor.

The protein belongs to the protein kinase superfamily. Ser/Thr protein kinase family. Poxviruses subfamily. Phosphorylated in vivo. Autophosphorylated in vitro.

Its subcellular location is the host endoplasmic reticulum. The protein localises to the host endoplasmic reticulum-Golgi intermediate compartment. It catalyses the reaction L-seryl-[protein] + ATP = O-phospho-L-seryl-[protein] + ADP + H(+). The catalysed reaction is L-threonyl-[protein] + ATP = O-phospho-L-threonyl-[protein] + ADP + H(+). Essential serine-protein kinase involved in the early stage of virion morphogenesis. This chain is Serine/threonine-protein kinase 2 (OPG054), found in Vaccinia virus (strain L-IVP) (VACV).